Consider the following 29-residue polypeptide: Brevinin-2Tc (29 aa).

Cys-23 and Cys-29 are disulfide-bonded.

This sequence belongs to the frog skin active peptide (FSAP) family. Brevinin subfamily. Expressed by the skin glands.

The protein resides in the secreted. Antibacterial activity against representative Gram-negative and Gram-positive bacteria. This Rana temporaria (European common frog) protein is Brevinin-2Tc.